Reading from the N-terminus, the 1077-residue chain is FKBP12-associated protein 1 homolog (1077 aa).

Residues Met1–Lys173 are disordered. Basic residues predominate over residues Ala15–Lys29. Position 33 is a phosphoserine (Ser33). The span at Glu52 to Lys64 shows a compositional bias: basic and acidic residues. The span at Pro76 to Asn87 shows a compositional bias: polar residues. The segment covering Ser100–Arg116 has biased composition (basic and acidic residues). The span at Ser136–Ser149 shows a compositional bias: low complexity. The segment covering Lys153–Lys173 has biased composition (basic and acidic residues). The segment at Cys197 to Gln247 adopts an RING-type; atypical zinc-finger fold. 8 NF-X1-type zinc fingers span residues Cys290–Ala308, Cys348–Glu367, Cys420–Phe441, Cys485–Glu503, Cys541–Gln558, Cys595–Glu614, Cys708–Lys729, and Cys738–Ala760. The region spanning Ser835–Gly897 is the R3H domain.

It belongs to the NFX1 family.

It localises to the cytoplasm. The protein localises to the golgi apparatus. It is found in the nucleus. In terms of biological role, may play a role in transcription regulation. This chain is FKBP12-associated protein 1 homolog (fap1), found in Schizosaccharomyces pombe (strain 972 / ATCC 24843) (Fission yeast).